The primary structure comprises 88 residues: Large ribosomal subunit protein bL27 (88 aa).

Residues 1-21 (MAHKKGTGSTRNGRDSNAKRL) are disordered.

This sequence belongs to the bacterial ribosomal protein bL27 family.

In Parasynechococcus marenigrum (strain WH8102), this protein is Large ribosomal subunit protein bL27.